We begin with the raw amino-acid sequence, 259 residues long: Insulin-like growth factor-binding protein 1 (259 aa).

The first 25 residues, 1–25 (MSEVPVARVWLVLLLLTVQVGVTAG), serve as a signal peptide directing secretion. Residues 26–107 (APWQCAPCSA…TRGQGACVQE (82 aa)) form the IGFBP N-terminal domain. 6 disulfides stabilise this stretch: cysteine 30–cysteine 57, cysteine 33–cysteine 59, cysteine 41–cysteine 60, cysteine 48–cysteine 63, cysteine 71–cysteine 84, and cysteine 78–cysteine 104. Serine 45 bears the Phosphoserine; by FAM20C mark. Serine 120, serine 123, serine 126, and serine 144 each carry phosphoserine. Serine 156 carries the post-translational modification Phosphoserine; by FAM20C. Residue threonine 157 is modified to Phosphothreonine; by FAM20C. The residue at position 158 (tyrosine 158) is a Phosphotyrosine. One can recognise a Thyroglobulin type-1 domain in the interval 173 to 251 (KEPCRIELYR…SPEIRGDPNC (79 aa)). Intrachain disulfides connect cysteine 176–cysteine 206, cysteine 217–cysteine 228, and cysteine 230–cysteine 251. At threonine 193 the chain carries Phosphothreonine; by FAM20C. 2 positions are modified to phosphoserine; by FAM20C: serine 194 and serine 199. At serine 242 the chain carries Phosphoserine; by FAM20C. The short motif at 246–248 (RGD) is the Cell attachment site element.

In terms of assembly, binds equally well IGF1 and IGF2. Interacts with integrin ITGA5:ITGB1. Interacts with VHL; this interaction inhibits HIF1A degradation. Post-translationally, phosphorylated; probably by casein kinase II. Phosphorylation alters the affinity of the protein for IGFs. In amniotic fluid, the unmodified protein is the most abundant form, while mono-, bi-, tri- and tetraphosphorylated forms are present in decreasing amounts. The phosphorylation state may influence the propensity to proteolysis.

The protein localises to the secreted. Multifunctional protein that plays a critical role in regulating the availability of IGFs such as IGF1 and IGF2 to their receptors and thereby regulates IGF-mediated cellular processes including cell migration, proliferation, differentiation or apoptosis in a cell-type specific manner. Also plays a positive role in cell migration by interacting with integrin ITGA5:ITGB1 through its RGD motif. Mechanistically, binding to integrins leads to activation of focal adhesion kinase/PTK2 and stimulation of the mitogen-activated protein kinase (MAPK) pathway. Regulates cardiomyocyte apoptosis by suppressing HIF-1alpha/HIF1A ubiquitination and subsequent degradation. The polypeptide is Insulin-like growth factor-binding protein 1 (IGFBP1) (Homo sapiens (Human)).